An 862-amino-acid chain; its full sequence is MFLNTLKAVFGTKNDREVKKYFKRVAQINALEGNYQNLSDDELKAEFAKFKEQILSGEKNENDVLNDVFAIVRETGKRTLNMRHFDVQLIGGMVLHDGKIAEMKTGEGKTLVATLPVVLNAMSGKGVHVVTVNDYLAKRDAEQMSAIYNFLGFSVGVVLSSQNSDIEHKQAYDCDITYGTNNEFGFDYLRDNMKFSKAEKVQREHNFVIVDEVDSILIDEARTPLIISGPTNRTLDGYIKANEVAKQMQKGEAVLPPAKPEGDFVVDEKNRNILITEAGIAKAEKLFGVENLYSLDNAILAHQLDQALKAHNLFEKDVHYVLRNNEVIIVDEFTGRLSEGRRFSEGLHQALEAKENVKIQEESQTLADITFQNYFRMYNKLAGMTGTAQTEATEFSQIYSLDVISIPTNIPIKRQDKDDLIYKTQNEKFKAVIEEIKKANAKGQPVLVGTASIERSEVFHNMLVKEKIPHHVLNAKNHEQEALIIQDAGKKGAVTIATNMAGRGVDIKIDDEIRALGGLYIIGTERHESRRIDNQLRGRAGRQGDPGISRFYLSLEDNLLRIFGGDRIKSIMDRLGIEEGESIESRIVTRAVENAQKKVESLHFESRKHLLEYDDVANEQRKTIYRYRNELLDENYDIRAKISQNIAEYSANVMNDYILDESGSNVNFENLKAKILYECSTQISEKDFENLSVIEMQDKLSQILENSYNEKMSRLEIKELRNIERILYLQVLDNAWREHLYQMDILKTGIGLRGYNQKDPLVEYKKESYNLFLELVNRIKFDSIKLLFSVQFNQEEVQNLENKANEENEKLLQSSVEMGASEDNLGEAEFKKVPRNAPCPCGSGKKFKECHGKSGPKQGILA.

Residues Gln-88, 106–110 (GEGKT), and Asp-506 each bind ATP. Zn(2+) contacts are provided by Cys-839, Cys-841, Cys-850, and His-851.

This sequence belongs to the SecA family. Monomer and homodimer. Part of the essential Sec protein translocation apparatus which comprises SecA, SecYEG and auxiliary proteins SecDF-YajC and YidC. Zn(2+) is required as a cofactor.

It is found in the cell inner membrane. It localises to the cytoplasm. It carries out the reaction ATP + H2O + cellular proteinSide 1 = ADP + phosphate + cellular proteinSide 2.. Functionally, part of the Sec protein translocase complex. Interacts with the SecYEG preprotein conducting channel. Has a central role in coupling the hydrolysis of ATP to the transfer of proteins into and across the cell membrane, serving as an ATP-driven molecular motor driving the stepwise translocation of polypeptide chains across the membrane. The sequence is that of Protein translocase subunit SecA from Campylobacter jejuni (strain RM1221).